The chain runs to 370 residues: Protein Mut11 (370 aa).

A disordered region spans residues 1-22; the sequence is MARGPGDTDMDEASADAAIPSS. 7 WD repeats span residues 38–77, 80–119, 122–162, 165–204, 208–247, 262–301, and 329–370; these read GHTK…RVNT, GHSC…CLRT, GHTN…CLRE, AHSD…CLKT, RDSP…TRRT, GFLG…VVGR, and GHTA…PAAA.

The protein belongs to the WD repeat WDR5/wds family.

It is found in the nucleus. Its function is as follows. Part of a complex involved in 'Lys-4' histone H3 methylation. This is Protein Mut11 (Mut11) from Chlamydomonas reinhardtii (Chlamydomonas smithii).